The primary structure comprises 935 residues: ABC transporter A family member 7 (935 aa).

7 consecutive transmembrane segments (helical) span residues 34-54 (LIMI…LFDT), 338-358 (IASL…FPVI), 392-412 (FLTI…AIGL), 424-444 (FVFY…VSSV), 454-474 (ASYI…NFLI), 483-503 (WIIV…YELA), and 528-548 (DDVF…AYYI). The tract at residues 571–591 (SLRRPSLQRQGSKVSVDMEKP) is disordered. The region spanning 613-850 (IVCDNLKKVY…YGGSYVFTMT (238 aa)) is the ABC transporter domain. 651–658 (GPNGAGKT) provides a ligand contact to ATP.

Belongs to the ABC transporter superfamily. ABCA family. CPR flippase (TC 3.A.1.211) subfamily.

Its subcellular location is the membrane. This is ABC transporter A family member 7 (ABCA7) from Arabidopsis thaliana (Mouse-ear cress).